Reading from the N-terminus, the 334-residue chain is DNA-directed RNA polymerase subunit alpha (334 aa).

The segment at 1–231 (MQSNTFLTPR…EQLSVFADLK (231 aa)) is alpha N-terminal domain (alpha-NTD). The segment at 245-334 (IDPVLLRPVD…GKKDTSHAAP (90 aa)) is alpha C-terminal domain (alpha-CTD).

The protein belongs to the RNA polymerase alpha chain family. In terms of assembly, homodimer. The RNAP catalytic core consists of 2 alpha, 1 beta, 1 beta' and 1 omega subunit. When a sigma factor is associated with the core the holoenzyme is formed, which can initiate transcription.

The catalysed reaction is RNA(n) + a ribonucleoside 5'-triphosphate = RNA(n+1) + diphosphate. In terms of biological role, DNA-dependent RNA polymerase catalyzes the transcription of DNA into RNA using the four ribonucleoside triphosphates as substrates. This chain is DNA-directed RNA polymerase subunit alpha, found in Nitrosospira multiformis (strain ATCC 25196 / NCIMB 11849 / C 71).